The following is a 396-amino-acid chain: F-box protein pof13 (396 aa).

The region spanning 40 to 89 (KNSNLFLLNRDIWSLIINYLDAFDILRLMHSSRQFYYWLRKSAVDECCFN) is the F-box domain.

In terms of assembly, part of a SCF (SKP1-cullin-F-box) protein ligase complex. Interacts with skp1.

It is found in the cytoplasm. The protein operates within protein modification; protein ubiquitination. The chain is F-box protein pof13 (pof13) from Schizosaccharomyces pombe (strain 972 / ATCC 24843) (Fission yeast).